Consider the following 149-residue polypeptide: Large ribosomal subunit protein uL15 (149 aa).

2 stretches are compositionally biased toward basic residues: residues M1–H14 and R21–G30. The tract at residues M1–T43 is disordered.

It belongs to the universal ribosomal protein uL15 family. As to quaternary structure, component of the large ribosomal subunit (LSU). Mature N.crassa ribosomes consist of a small (40S) and a large (60S) subunit. The 40S small subunit contains 1 molecule of ribosomal RNA (18S rRNA) and at least 32 different proteins. The large 60S subunit contains 3 rRNA molecules (26S, 5.8S and 5S rRNA) and at least 42 different proteins.

It is found in the cytoplasm. Its function is as follows. Component of the ribosome, a large ribonucleoprotein complex responsible for the synthesis of proteins in the cell. The small ribosomal subunit (SSU) binds messenger RNAs (mRNAs) and translates the encoded message by selecting cognate aminoacyl-transfer RNA (tRNA) molecules. The large subunit (LSU) contains the ribosomal catalytic site termed the peptidyl transferase center (PTC), which catalyzes the formation of peptide bonds, thereby polymerizing the amino acids delivered by tRNAs into a polypeptide chain. The nascent polypeptides leave the ribosome through a tunnel in the LSU and interact with protein factors that function in enzymatic processing, targeting, and the membrane insertion of nascent chains at the exit of the ribosomal tunnel. The protein is Large ribosomal subunit protein uL15 (rpl-28) of Neurospora crassa (strain ATCC 24698 / 74-OR23-1A / CBS 708.71 / DSM 1257 / FGSC 987).